Reading from the N-terminus, the 215-residue chain is CASP-like protein UU3 (215 aa).

Topologically, residues 1–44 (MATAWESEYFDKVTPGERERAVPPMVPQQTPPPVYIQPQVSRNG) are cytoplasmic. A helical transmembrane segment spans residues 45–65 (IVASIVLRLLTLIFAVVALAV). Residues 66–93 (LASNTGSFQVSTGSATSVKTIKFTILSA) are Extracellular-facing. Residues 94-114 (FTYLFAVCGVVAVYSLLLIIV) form a helical membrane-spanning segment. Residues 115 to 128 (EMIDLAVRGFTTHT) are Cytoplasmic-facing. Residues 129–149 (LVAIFVFVLDQTMAYVLISAA) form a helical membrane-spanning segment. Residues 150–185 (SASANGVKVSRDESNITGYKFDISCSNLGIDDYCTK) lie on the Extracellular side of the membrane. The N-linked (GlcNAc...) asparagine glycan is linked to N164. The chain crosses the membrane as a helical span at residues 186-206 (ASASVAIAFIAFLFMAITAGV). Residues 207–215 (SARRLFKLP) are Cytoplasmic-facing.

The protein belongs to the Casparian strip membrane proteins (CASP) family. In terms of assembly, homodimer and heterodimers.

It is found in the cell membrane. The sequence is that of CASP-like protein UU3 from Physcomitrium patens (Spreading-leaved earth moss).